Reading from the N-terminus, the 522-residue chain is Serine/threonine-protein kinase BSK1-2 (522 aa).

A disordered region spans residues Met-1–Ser-54. Gly-2 is lipidated: N-myristoyl glycine. Residues Ala-79–Gln-338 form the Protein kinase domain. ATP-binding positions include Ser-85–Val-93 and Lys-111. Asp-205 (proton acceptor) is an active-site residue.

Belongs to the protein kinase superfamily. Ser/Thr protein kinase family.

The protein resides in the cell membrane. It carries out the reaction L-seryl-[protein] + ATP = O-phospho-L-seryl-[protein] + ADP + H(+). The catalysed reaction is L-threonyl-[protein] + ATP = O-phospho-L-threonyl-[protein] + ADP + H(+). Functionally, probable serine/threonine kinase that functions as a positive regulator of plant immunity. May be involved in the regulation of pattern-triggered immunity (PTI). Does not seem to be involved in responses to brassinosteroid (BR) signaling. The protein is Serine/threonine-protein kinase BSK1-2 of Oryza sativa subsp. japonica (Rice).